Reading from the N-terminus, the 232-residue chain is MNKTIQLQDLGHKDYKATWDYQEQLFQNVLDIKIQNRREERQDQTPNYFLFVEHPHVYTLGKSGDLSNLLLSEKQLEAKGATFYKINRGGDITYHGPGQIVGYPILDLENFFTDIHKYLRLLEEAIILTLAEYNITGTRSEGETGVWLGVGTPFARKICALGVRASRWVTMHGFALNANADLGYFDNIIPCGIKGKAVTSLNVELGVEKVNEEEVKEKILKHFTQLFDCTVI.

The 189-residue stretch at 43–231 (DQTPNYFLFV…HFTQLFDCTV (189 aa)) folds into the BPL/LPL catalytic domain. Residues 88–95 (RGGDITYH), 160–162 (ALG), and 173–175 (GFA) each bind substrate. C191 functions as the Acyl-thioester intermediate in the catalytic mechanism.

Belongs to the LipB family.

Its subcellular location is the cytoplasm. It carries out the reaction octanoyl-[ACP] + L-lysyl-[protein] = N(6)-octanoyl-L-lysyl-[protein] + holo-[ACP] + H(+). It participates in protein modification; protein lipoylation via endogenous pathway; protein N(6)-(lipoyl)lysine from octanoyl-[acyl-carrier-protein]: step 1/2. In terms of biological role, catalyzes the transfer of endogenously produced octanoic acid from octanoyl-acyl-carrier-protein onto the lipoyl domains of lipoate-dependent enzymes. Lipoyl-ACP can also act as a substrate although octanoyl-ACP is likely to be the physiological substrate. This Flavobacterium psychrophilum (strain ATCC 49511 / DSM 21280 / CIP 103535 / JIP02/86) protein is Octanoyltransferase.